The primary structure comprises 297 residues: uncharacterized protein (297 aa).

The tract at residues 136-174 (FSETNDDSTDEEIDTPINDDDDDDKNNDADNNDINEDNK) is disordered. The span at 139–170 (TNDDSTDEEIDTPINDDDDDDKNNDADNNDIN) shows a compositional bias: acidic residues.

This sequence to S.pombe SpBC725.03.

This is an uncharacterized protein from Saccharomyces cerevisiae (strain ATCC 204508 / S288c) (Baker's yeast).